The following is a 160-amino-acid chain: Sulfur-rich protein (160 aa).

2 helical membrane passes run 63-83 (ITMI…TFVL) and 92-112 (FLFL…SVFM).

It is found in the membrane. The polypeptide is Sulfur-rich protein (srp) (Chlamydia abortus (strain DSM 27085 / S26/3) (Chlamydophila abortus)).